A 357-amino-acid polypeptide reads, in one-letter code: Protein pelota homolog (357 aa).

It belongs to the eukaryotic release factor 1 family. Pelota subfamily. In terms of assembly, monomer. A divalent metal cation serves as cofactor.

The protein resides in the cytoplasm. May function in recognizing stalled ribosomes, interact with stem-loop structures in stalled mRNA molecules, and effect endonucleolytic cleavage of the mRNA. May play a role in the release non-functional ribosomes and degradation of damaged mRNAs. Has endoribonuclease activity. This chain is Protein pelota homolog, found in Thermococcus onnurineus (strain NA1).